The chain runs to 699 residues: MATAREIPLDRTRNIGIMAHIDAGKTTTTERVLYYTGVSHKMGEVHEGSAVMDWMEQEQERGITITSAATTCYWLGMDQQYPKHRINIIDTPGHVDFTIEVERSLRVLDGAVAVFCSVGGVEPQSETVWRQANRYHVPRLGFVNKMDRAGANFLRVVNQVKDRLNANPIPIQLPIGAEEDFKGVIDLIREKAIYWNEADRGRTYELADIPEDMKVEVQKWREKMIEAAAESSEELMDKYLEAGDLSPEQIRQGLRQRTLANEIVPILCGSAFKNKGVQALLDAVIDYLPSPTDVPAIRGEEDDGSEGSRSASDDEPFAALAFKIASDPFVGTLTFFRVYSGILKSGDSVYNPIKGKKERIGRLLQMHSNSREEIKEVRAGDIAAAVGLKTVTTGDTICNQQNIITLEKMDFPEPVISVAIEPKTKADQEKMGVALGKLAQEDPSFRVHTDEESAQTIIEGMGELHLEIIVDRMRREFNVEANVGKPRVAYRETIRRSVEQQGKYIRQTGGRGQYGDVWLRIEPREPGAGFEFENAIVGGVVPREYIPAVEKGVREQMENGIRAGYPVVDVKVTIFEGSYHDVDSSEMAFKIAGSMAFKEGASKADPVLLEPIMKVEVVTPEEYMGDVVGDLNRRRGMIQGMDESPAGKIVDVEVPLAEMFGYATDLRSLSQGRATYTMEFLKYAEAPSNIAEAIIKQQS.

In terms of domain architecture, tr-type G spans 10 to 292 (DRTRNIGIMA…AVIDYLPSPT (283 aa)). GTP-binding positions include 19–26 (AHIDAGKT), 90–94 (DTPGH), and 144–147 (NKMD).

Belongs to the TRAFAC class translation factor GTPase superfamily. Classic translation factor GTPase family. EF-G/EF-2 subfamily.

It localises to the cytoplasm. Its function is as follows. Catalyzes the GTP-dependent ribosomal translocation step during translation elongation. During this step, the ribosome changes from the pre-translocational (PRE) to the post-translocational (POST) state as the newly formed A-site-bound peptidyl-tRNA and P-site-bound deacylated tRNA move to the P and E sites, respectively. Catalyzes the coordinated movement of the two tRNA molecules, the mRNA and conformational changes in the ribosome. This chain is Elongation factor G, found in Coxiella burnetii (strain Dugway 5J108-111).